Consider the following 368-residue polypeptide: 1-deoxy-D-xylulose 5-phosphate reductoisomerase (368 aa).

NADPH-binding residues include Thr-7, Gly-8, Ser-9, Ile-10, Gly-31, Lys-32, Asn-33, and Asn-113. Lys-114 is a binding site for 1-deoxy-D-xylulose 5-phosphate. Residue Glu-115 coordinates NADPH. Asp-133 is a Mn(2+) binding site. Residues Ser-134, Glu-135, Ser-158, and His-181 each contribute to the 1-deoxy-D-xylulose 5-phosphate site. Glu-135 is a Mn(2+) binding site. Gly-187 is an NADPH binding site. The 1-deoxy-D-xylulose 5-phosphate site is built by Ser-194, Asn-199, Lys-200, and Glu-203. Glu-203 lines the Mn(2+) pocket.

Belongs to the DXR family. Mg(2+) is required as a cofactor. It depends on Mn(2+) as a cofactor.

It carries out the reaction 2-C-methyl-D-erythritol 4-phosphate + NADP(+) = 1-deoxy-D-xylulose 5-phosphate + NADPH + H(+). It functions in the pathway isoprenoid biosynthesis; isopentenyl diphosphate biosynthesis via DXP pathway; isopentenyl diphosphate from 1-deoxy-D-xylulose 5-phosphate: step 1/6. Functionally, catalyzes the NADPH-dependent rearrangement and reduction of 1-deoxy-D-xylulose-5-phosphate (DXP) to 2-C-methyl-D-erythritol 4-phosphate (MEP). In Helicobacter pylori (strain HPAG1), this protein is 1-deoxy-D-xylulose 5-phosphate reductoisomerase.